A 440-amino-acid polypeptide reads, in one-letter code: tRNA(Ile)-lysidine synthase (440 aa).

19 to 24 (SGGLDS) is an ATP binding site.

It belongs to the tRNA(Ile)-lysidine synthase family.

It is found in the cytoplasm. The catalysed reaction is cytidine(34) in tRNA(Ile2) + L-lysine + ATP = lysidine(34) in tRNA(Ile2) + AMP + diphosphate + H(+). Its function is as follows. Ligates lysine onto the cytidine present at position 34 of the AUA codon-specific tRNA(Ile) that contains the anticodon CAU, in an ATP-dependent manner. Cytidine is converted to lysidine, thus changing the amino acid specificity of the tRNA from methionine to isoleucine. This chain is tRNA(Ile)-lysidine synthase, found in Buchnera aphidicola subsp. Acyrthosiphon pisum (strain APS) (Acyrthosiphon pisum symbiotic bacterium).